We begin with the raw amino-acid sequence, 498 residues long: NAC domain-containing protein 75 (498 aa).

One can recognise an NAC domain in the interval 48-215 (LPAGVKFDPT…ELVVSKIFYQ (168 aa)). A DNA-binding region spans residues 166–221 (KGCKKILVLYTNFGKNRKPEKTNWVMHQYHLGTHEEEKEGELVVSKIFYQTQPRQC). 4 disordered regions span residues 225–278 (SSTS…PNRS), 338–374 (VMAE…QRHH), 423–443 (QQQL…GGRS), and 457–498 (STTH…DHHG). Residues 233 to 248 (IGGGGGEASSGGGGGE) show a composition bias toward gly residues. The segment covering 256 to 266 (GTTSGGSCSSS) has biased composition (low complexity). Basic residues predominate over residues 356-374 (HMAHDHHHHHHQQQQQRHH). Residues 466-475 (GSSSMGNQQE) are compositionally biased toward polar residues.

Expressed in the vascular cylinder of roots. Expressed in the differentiation zone of the root stele.

It localises to the nucleus. In terms of biological role, transcription activator involved in xylem formation. Promotes the expression of the secondary wall-associated transcription factor MYB46. Functions upstream of NAC030/VND7, a master switch of xylem vessel differentiation. Acts as a upstream regulator of NAC101/VND6 and LBD30/ASL19. The protein is NAC domain-containing protein 75 of Arabidopsis thaliana (Mouse-ear cress).